A 230-amino-acid polypeptide reads, in one-letter code: Orotidine 5'-phosphate decarboxylase (230 aa).

Substrate-binding positions include Asp-11, Lys-34, 61–70 (DLKLHDIPNT), Thr-117, Arg-179, Gln-188, Gly-208, and Arg-209. Lys-63 serves as the catalytic Proton donor.

It belongs to the OMP decarboxylase family. Type 1 subfamily. As to quaternary structure, homodimer.

The enzyme catalyses orotidine 5'-phosphate + H(+) = UMP + CO2. The protein operates within pyrimidine metabolism; UMP biosynthesis via de novo pathway; UMP from orotate: step 2/2. Its function is as follows. Catalyzes the decarboxylation of orotidine 5'-monophosphate (OMP) to uridine 5'-monophosphate (UMP). The polypeptide is Orotidine 5'-phosphate decarboxylase (Streptococcus pyogenes serotype M1).